Consider the following 644-residue polypeptide: MNIFDHYRQRYEAAKDEEFTLQEFLTTCRQDRSAYANAAERLLMAIGEPVMVDTAQEPRLSRLFSNRVIARYPAFEEFYGMEDAIEQIVSYLKHAAQGLEEKKQILYLLGPVGGGKSSLAERLKSLMQLVPIYVLSANGERSPVNDHPFCLFNPQEDAQILEKEYGIPRRYLGTIMSPWAAKRLHEFGGDITKFRVVKVWPSILQQIAIAKTEPGDENNQDISALVGKVDIRKLEHYAQNDPDAYGYSGALCRANQGIMEFVEMFKAPIKVLHPLLTATQEGNYNGTEGISALPFNGIILAHSNESEWVTFRNNKNNEAFLDRVYIVKVPYCLRISEEIKIYEKLLNHSELTHAPCAPGTLETLSRFSILSRLKEPENSSIYSKMRVYDGESLKDTDPKAKSYQEYRDYAGVDEGMNGLSTRFAFKILSRVFNFDHVEVAANPVHLFYVLEQQIEREQFPQEQAERYLEFLKGYLIPKYAEFIGKEIQTAYLESYSEYGQNIFDRYVTYADFWIQDQEYRDPDTGQLFDRESLNAELEKIEKPAGISNPKDFRNEIVNFVLRARANNSGRNPNWTSYEKLRTVIEKKMFSNTEELLPVISFNAKTSTDEQKKHDDFVDRMMEKGYTRKQVRLLCEWYLRVRKSS.

This sequence belongs to the PrkA family. In terms of assembly, monomer.

It is found in the cytoplasm. The enzyme catalyses L-seryl-[protein] + ATP = O-phospho-L-seryl-[protein] + ADP + H(+). It catalyses the reaction L-threonyl-[protein] + ATP = O-phospho-L-threonyl-[protein] + ADP + H(+). Kinase that plays a role in the adaptation to sustained nitrogen starvation. In Escherichia coli O157:H7, this protein is Serine/threonine kinase YeaG (yeaG).